Consider the following 453-residue polypeptide: Glutamyl-tRNA reductase (453 aa).

Residues 49-52 (TCNR), S109, 114-116 (EQQ), and Q120 each bind substrate. The active-site Nucleophile is C50. Position 191–196 (191–196 (GAGSMG)) interacts with NADP(+). Positions 432–453 (PAAVATPTDLVDGDRTGRDLQA) are disordered. The span at 443–453 (DGDRTGRDLQA) shows a compositional bias: basic and acidic residues.

Belongs to the glutamyl-tRNA reductase family. As to quaternary structure, homodimer.

The catalysed reaction is (S)-4-amino-5-oxopentanoate + tRNA(Glu) + NADP(+) = L-glutamyl-tRNA(Glu) + NADPH + H(+). Its pathway is porphyrin-containing compound metabolism; protoporphyrin-IX biosynthesis; 5-aminolevulinate from L-glutamyl-tRNA(Glu): step 1/2. In terms of biological role, catalyzes the NADPH-dependent reduction of glutamyl-tRNA(Glu) to glutamate 1-semialdehyde (GSA). The protein is Glutamyl-tRNA reductase of Rhodococcus erythropolis (strain PR4 / NBRC 100887).